The primary structure comprises 188 residues: Probable manganese efflux pump MntP (188 aa).

Helical transmembrane passes span 3–23 (ITAT…ASVG), 66–86 (LEWN…RMII), 106–128 (WLLV…GLAF), 143–163 (ATLI…SIIG), and 168–188 (ILGG…HFHG).

This sequence belongs to the MntP (TC 9.B.29) family.

It localises to the cell inner membrane. In terms of biological role, probably functions as a manganese efflux pump. This Shigella sonnei (strain Ss046) protein is Probable manganese efflux pump MntP.